A 122-amino-acid chain; its full sequence is MIYLYTADNVIPKDGLQGAFVDKDGTYDKVYILFTVTIGSKRIVKIPYIAQMCLNDECGPSSLSSHRWSTLLKVELECDIDGRSYSQINHSKTIKQIMIRYYMYSLIVLFQVRIMYLFYEYH.

In terms of domain architecture, Sema spans 1-122 (MIYLYTADNV…RIMYLFYEYH (122 aa)).

This sequence belongs to the semaphorin family.

This Homo sapiens (Human) protein is Semaphorin-like protein A43 (A43R).